A 394-amino-acid chain; its full sequence is Elongation factor Tu (394 aa).

The region spanning lysine 10–glutamate 204 is the tr-type G domain. The segment at glycine 19–threonine 26 is G1. Residue glycine 19–threonine 26 coordinates GTP. A Mg(2+)-binding site is contributed by threonine 26. Residues glycine 60 to asparagine 64 form a G2 region. Residues aspartate 81–glycine 84 form a G3 region. GTP contacts are provided by residues aspartate 81–histidine 85 and asparagine 136–aspartate 139. Residues asparagine 136–aspartate 139 form a G4 region. Positions serine 174 to leucine 176 are G5.

This sequence belongs to the TRAFAC class translation factor GTPase superfamily. Classic translation factor GTPase family. EF-Tu/EF-1A subfamily. Monomer.

The protein localises to the cytoplasm. The catalysed reaction is GTP + H2O = GDP + phosphate + H(+). GTP hydrolase that promotes the GTP-dependent binding of aminoacyl-tRNA to the A-site of ribosomes during protein biosynthesis. The protein is Elongation factor Tu of Shewanella amazonensis (strain ATCC BAA-1098 / SB2B).